Here is a 649-residue protein sequence, read N- to C-terminus: uncharacterized protein (649 aa).

It localises to the nucleus. The protein resides in the cytoplasm. This is an uncharacterized protein from Schizosaccharomyces pombe (strain 972 / ATCC 24843) (Fission yeast).